The chain runs to 287 residues: NAD kinase (287 aa).

Residue aspartate 66 is the Proton acceptor of the active site. Residues 66–67, 137–138, arginine 148, arginine 165, aspartate 167, and 178–183 each bind NAD(+); these read DG, ND, and TAYSMS.

The protein belongs to the NAD kinase family. Requires a divalent metal cation as cofactor.

It is found in the cytoplasm. It carries out the reaction NAD(+) + ATP = ADP + NADP(+) + H(+). Functionally, involved in the regulation of the intracellular balance of NAD and NADP, and is a key enzyme in the biosynthesis of NADP. Catalyzes specifically the phosphorylation on 2'-hydroxyl of the adenosine moiety of NAD to yield NADP. This is NAD kinase from Chlorobium limicola (strain DSM 245 / NBRC 103803 / 6330).